Reading from the N-terminus, the 100-residue chain is Small ribosomal subunit protein uS14c (100 aa).

It belongs to the universal ribosomal protein uS14 family. Part of the 30S ribosomal subunit.

The protein resides in the plastid. It localises to the chloroplast. Its function is as follows. Binds 16S rRNA, required for the assembly of 30S particles. The sequence is that of Small ribosomal subunit protein uS14c from Adiantum capillus-veneris (Maidenhair fern).